Here is a 290-residue protein sequence, read N- to C-terminus: Putative transport permease ycf38 (290 aa).

The next 7 helical transmembrane spans lie at V21–L41, I46–F66, P86–F106, F133–L153, F167–L187, L194–A213, and I261–F281. The ABC transmembrane type-2 domain maps to I46 to I284.

It belongs to the ABC-2 integral membrane protein family.

The protein resides in the plastid. Its subcellular location is the cyanelle membrane. This chain is Putative transport permease ycf38 (ycf38), found in Cyanophora paradoxa.